Consider the following 209-residue polypeptide: Uracil phosphoribosyltransferase (209 aa).

5-phospho-alpha-D-ribose 1-diphosphate is bound by residues Arg79, Arg104, and 131–139; that span reads DPMLATGGS. Residues Ile194 and 199–201 each bind uracil; that span reads GDA. Asp200 lines the 5-phospho-alpha-D-ribose 1-diphosphate pocket.

Belongs to the UPRTase family. It depends on Mg(2+) as a cofactor.

It catalyses the reaction UMP + diphosphate = 5-phospho-alpha-D-ribose 1-diphosphate + uracil. Its pathway is pyrimidine metabolism; UMP biosynthesis via salvage pathway; UMP from uracil: step 1/1. Allosterically activated by GTP. Functionally, catalyzes the conversion of uracil and 5-phospho-alpha-D-ribose 1-diphosphate (PRPP) to UMP and diphosphate. The sequence is that of Uracil phosphoribosyltransferase from Listeria innocua serovar 6a (strain ATCC BAA-680 / CLIP 11262).